We begin with the raw amino-acid sequence, 533 residues long: Probable lipid II flippase MurJ (533 aa).

13 helical membrane-spanning segments follow: residues 25–45 (ETLM…YAAF), 90–110 (VLFS…PLLV), 131–151 (LAAV…MSGM), 158–178 (FFAA…ALFY), 192–212 (YLSW…YIGV), 233–253 (LLLL…NLVI), 274–294 (IYQL…LPEL), 316–336 (FVLF…DDII), 350–370 (TTLV…FVLI), 389–409 (YTAI…PVLA), 412–432 (GIAL…FVTL), 449–469 (AMLL…SHRW), and 484–504 (GVLG…AFLI).

Belongs to the MurJ/MviN family.

Its subcellular location is the cell inner membrane. The protein operates within cell wall biogenesis; peptidoglycan biosynthesis. Involved in peptidoglycan biosynthesis. Transports lipid-linked peptidoglycan precursors from the inner to the outer leaflet of the cytoplasmic membrane. This is Probable lipid II flippase MurJ from Rhizobium tropici.